The sequence spans 172 residues: UPF0114 protein PMI3225 (172 aa).

4 consecutive transmembrane segments (helical) span residues 15–35 (LFAP…IKFF), 57–77 (LLSL…IFSG), 108–128 (KVAA…FMDL), and 136–156 (LLWY…MGYL).

It belongs to the UPF0114 family.

The protein resides in the cell membrane. The sequence is that of UPF0114 protein PMI3225 from Proteus mirabilis (strain HI4320).